Reading from the N-terminus, the 1677-residue chain is ELMO domain-containing protein E (1677 aa).

Disordered stretches follow at residues T112–S139, N168–K194, Q264–E372, D592–S625, P775–N801, I888–I947, K982–E1002, S1047–S1075, K1122–S1141, N1197–A1248, D1261–R1404, S1434–E1454, K1467–S1593, and E1654–K1677. Composition is skewed to low complexity over residues S115–S139 and T172–K194. Residues S269 to G278 are compositionally biased toward gly residues. 3 stretches are compositionally biased toward low complexity: residues S307–N334, T341–S352, and N597–N616. One can recognise an ELMO domain in the interval S492–C710. Over residues N891–V903 the composition is skewed to gly residues. Over residues I922–E933 the composition is skewed to acidic residues. 2 stretches are compositionally biased toward low complexity: residues V934–D946 and S985–P996. A coiled-coil region spans residues L1186–I1212. The segment covering E1228–E1238 has biased composition (acidic residues). Positions N1285 to T1305 are enriched in low complexity. Residues G1306–S1334 are compositionally biased toward polar residues. The span at D1387–K1397 shows a compositional bias: acidic residues. The span at P1445–E1454 shows a compositional bias: polar residues. Composition is skewed to low complexity over residues L1475–S1488, S1503–S1574, and A1663–K1677.

The chain is ELMO domain-containing protein E (elmoE) from Dictyostelium discoideum (Social amoeba).